The sequence spans 153 residues: Ribosome-binding factor A (153 aa).

The tract at residues 116-153 (DAQVAEQAQGAQYAAGEDAYRTPSDEDDAEGPESAPRV) is disordered. Positions 119-132 (VAEQAQGAQYAAGE) are enriched in low complexity.

This sequence belongs to the RbfA family. In terms of assembly, monomer. Binds 30S ribosomal subunits, but not 50S ribosomal subunits or 70S ribosomes.

Its subcellular location is the cytoplasm. One of several proteins that assist in the late maturation steps of the functional core of the 30S ribosomal subunit. Associates with free 30S ribosomal subunits (but not with 30S subunits that are part of 70S ribosomes or polysomes). Required for efficient processing of 16S rRNA. May interact with the 5'-terminal helix region of 16S rRNA. This chain is Ribosome-binding factor A, found in Kocuria rhizophila (strain ATCC 9341 / DSM 348 / NBRC 103217 / DC2201).